Reading from the N-terminus, the 75-residue chain is Putative DNA-directed RNA polymerase subunit omega (75 aa).

This sequence belongs to the RNA polymerase subunit omega family.

The protein localises to the plastid. It localises to the chloroplast. It carries out the reaction RNA(n) + a ribonucleoside 5'-triphosphate = RNA(n+1) + diphosphate. Its function is as follows. May be involved in RNA polymerase activity. In Mesostigma viride (Green alga), this protein is Putative DNA-directed RNA polymerase subunit omega (rpoZ).